Reading from the N-terminus, the 458-residue chain is Ammonium transporter Rh type B (458 aa).

Residues 1-13 (MAGSPSRAAGRRL) are Cytoplasmic-facing. A helical transmembrane segment spans residues 14-34 (QLPLLCLFLQGATAVLFAVFV). Residues 35–61 (RYNHKTDAALWHRGNHSNADNEFYFRY) are Extracellular-facing. N-linked (GlcNAc...) asparagine glycosylation is present at N49. The chain crosses the membrane as a helical span at residues 62–82 (PSFQDVHAMVFVGFGFLMVFL). Residues 83 to 86 (QRYG) are Cytoplasmic-facing. The helical transmembrane segment at 87 to 107 (FSSVGFTFLLAAFALQWSTLV) threads the bilayer. Residues 108 to 124 (QGFLHSFHSGHIHVGVE) lie on the Extracellular side of the membrane. Residues 125–145 (SMINADFCAGAVLISFGAVLG) traverse the membrane as a helical segment. At 146–149 (KTGP) the chain is on the cytoplasmic side. Residues 150-170 (AQLLLMALLEVVLFGINEFVL) traverse the membrane as a helical segment. Over 171–178 (LHLLGVRD) the chain is Extracellular. A helical transmembrane segment spans residues 179–201 (AGGSMTIHTFGAYFGLVLSRVLY). Residues 202–219 (RPQLEKSKHRQGSVYHSD) lie on the Cytoplasmic side of the membrane. Residues 220–240 (LFAMIGTIFLWIFWPSFNSAL) traverse the membrane as a helical segment. The Extracellular portion of the chain corresponds to 241-251 (TALGAGQHRTA). The helical transmembrane segment at 252 to 272 (LNTYYSLAASTLGTFALSALV) threads the bilayer. The Cytoplasmic segment spans residues 273 to 282 (GEDGRLDMVH). A helical transmembrane segment spans residues 283–303 (IQNAALAGGVVVGTSSEMMLT). Position 304 (P304) is a topological domain, extracellular. The helical transmembrane segment at 305 to 325 (FGALAAGFLAGTVSTLGYKFF) threads the bilayer. The Cytoplasmic portion of the chain corresponds to 326–346 (TPILESKFKVQDTCGVHNLHG). A helical membrane pass occupies residues 347-367 (MPGVLGALLGVLVAGLATHEA). At 368–393 (YGDGLESVFPLIAEGQRSATSQAMLQ) the chain is on the extracellular side. Residues 394-414 (LFGLFVTLMFASVGGGLGGLL) traverse the membrane as a helical segment. The Cytoplasmic portion of the chain corresponds to 415–458 (LKLPFLDSPPDSQCYEDQVHWQVPGEHEDEAQRPLRVEEADTQA). Residues 416–424 (KLPFLDSPP) are interaction with ANK3. Positions 429–432 (YEDQ) match the Basolateral sorting signal motif. The disordered stretch occupies residues 439-458 (GEHEDEAQRPLRVEEADTQA). Residues 444–458 (EAQRPLRVEEADTQA) are compositionally biased toward basic and acidic residues.

It belongs to the ammonium transporter (TC 2.A.49) family. Rh subfamily. As to quaternary structure, interacts (via C-terminus) with ANK2 and ANK3; required for targeting to the basolateral membrane. N-glycosylated.

The protein localises to the cell membrane. The protein resides in the basolateral cell membrane. It carries out the reaction NH4(+)(in) = NH4(+)(out). The catalysed reaction is methylamine(out) = methylamine(in). The enzyme catalyses CO2(out) = CO2(in). Its function is as follows. Ammonium transporter involved in the maintenance of acid-base homeostasis. Transports ammonium and its related derivative methylammonium across the basolateral plasma membrane of epithelial cells likely contributing to renal transepithelial ammonia transport and ammonia metabolism. May transport either NH4(+) or NH3 ammonia species predominantly mediating an electrogenic NH4(+) transport. May act as a CO2 channel providing for renal acid secretion. The protein is Ammonium transporter Rh type B (RHBG) of Macaca mulatta (Rhesus macaque).